We begin with the raw amino-acid sequence, 420 residues long: Serine hydroxymethyltransferase (420 aa).

(6S)-5,6,7,8-tetrahydrofolate-binding positions include Leu123 and 127-129 (GHL). Lys232 carries the N6-(pyridoxal phosphate)lysine modification. 357 to 359 (SPF) contributes to the (6S)-5,6,7,8-tetrahydrofolate binding site.

It belongs to the SHMT family. Homodimer. The cofactor is pyridoxal 5'-phosphate.

The protein resides in the cytoplasm. The catalysed reaction is (6R)-5,10-methylene-5,6,7,8-tetrahydrofolate + glycine + H2O = (6S)-5,6,7,8-tetrahydrofolate + L-serine. The protein operates within one-carbon metabolism; tetrahydrofolate interconversion. It functions in the pathway amino-acid biosynthesis; glycine biosynthesis; glycine from L-serine: step 1/1. In terms of biological role, catalyzes the reversible interconversion of serine and glycine with tetrahydrofolate (THF) serving as the one-carbon carrier. This reaction serves as the major source of one-carbon groups required for the biosynthesis of purines, thymidylate, methionine, and other important biomolecules. Also exhibits THF-independent aldolase activity toward beta-hydroxyamino acids, producing glycine and aldehydes, via a retro-aldol mechanism. In Streptococcus pyogenes serotype M2 (strain MGAS10270), this protein is Serine hydroxymethyltransferase.